Consider the following 181-residue polypeptide: ATP-dependent protease subunit HslV (181 aa).

Residue Thr-2 is part of the active site. Positions 157, 160, and 163 each coordinate Na(+).

The protein belongs to the peptidase T1B family. HslV subfamily. A double ring-shaped homohexamer of HslV is capped on each side by a ring-shaped HslU homohexamer. The assembly of the HslU/HslV complex is dependent on binding of ATP.

It localises to the cytoplasm. The enzyme catalyses ATP-dependent cleavage of peptide bonds with broad specificity.. Allosterically activated by HslU binding. Its function is as follows. Protease subunit of a proteasome-like degradation complex believed to be a general protein degrading machinery. The polypeptide is ATP-dependent protease subunit HslV (Hahella chejuensis (strain KCTC 2396)).